The chain runs to 24 residues: Grammistin Gs G (24 aa).

This sequence belongs to the grammistin family. Group 1 subfamily. Exists as aggregates of 3-4 molecules. Expressed by the skin glands.

It is found in the secreted. Its function is as follows. Thanks to its abundant amphiphilic alpha-helices, it may integrate into membrane phospholipids, leading to lysis of the membrane. Its high hemolytic activity is inhibited by phospholipids, but not by cholesterol. Has antibacterial activity with a broad spectrum against various species of bacteria including both Gram-positive and Gram-negative groups. Also has high ichthyotoxic activity. In Grammistes sexlineatus (Goldenstriped soapfish), this protein is Grammistin Gs G.